The primary structure comprises 223 residues: AN1-type zinc finger protein 6 (223 aa).

The A20-type zinc finger occupies 8-42 (SQAPMLCSTGCGFYGNPRTNGMCSVCYKEHLQRQN). The Zn(2+) site is built by cysteine 14, cysteine 18, cysteine 30, and cysteine 33. Residues 41 to 155 (QNSSNGRISP…PSEEQSKSLE (115 aa)) are disordered. At serine 49 the chain carries Phosphoserine. Composition is skewed to polar residues over residues 77–110 (ALDS…STSV) and 137–148 (SSVSDTTQQPSE). The AN1-type zinc finger occupies 158–204 (KQKKNRCFMCRKKVGLTGFECRCGNVYCGVHRYSDVHNCSYNYKADA). The Zn(2+) site is built by cysteine 164, cysteine 167, cysteine 178, cysteine 180, cysteine 185, histidine 188, histidine 194, and cysteine 196. An N6-acetyllysine modification is found at lysine 219.

Interacts with PKN1. Interacts with TRAF2. Interacts with mono- and polyubiquitin. Interacts with PEX6. Interacts with PEX5 (Cys-linked ubiquitinated).

The protein resides in the cytoplasm. Functionally, involved in regulation of TNF-alpha induced NF-kappa-B activation and apoptosis. Involved in modulation of 'Lys-48'-linked polyubiquitination status of TRAF2 and decreases association of TRAF2 with RIPK1. Required for PTS1 target sequence-dependent protein import into peroxisomes and PEX5 stability; may cooperate with PEX6. In vitro involved in PEX5 export from the cytosol to peroxisomes. This chain is AN1-type zinc finger protein 6 (Zfand6), found in Mus musculus (Mouse).